A 60-amino-acid chain; its full sequence is Large ribosomal subunit protein uL30 (60 aa).

Belongs to the universal ribosomal protein uL30 family. As to quaternary structure, part of the 50S ribosomal subunit.

This is Large ribosomal subunit protein uL30 from Limosilactobacillus fermentum (strain NBRC 3956 / LMG 18251) (Lactobacillus fermentum).